Here is a 685-residue protein sequence, read N- to C-terminus: Polyphosphate kinase (685 aa).

Asn45 contacts ATP. Residues Arg372 and Arg402 each coordinate Mg(2+). The region spanning 427–461 (PGLKIHAKLFLISRKEGDDVVRYAHIGTGNFNEKT) is the PLD phosphodiesterase 1 domain. The active-site Phosphohistidine intermediate is the His432. Tyr465, Arg561, and His589 together coordinate ATP. One can recognise a PLD phosphodiesterase 2 domain in the interval 584 to 614 (DRYLEHDRIYIFDNAGDKQVYLSSADWMTRN).

This sequence belongs to the polyphosphate kinase 1 (PPK1) family. Requires Mg(2+) as cofactor. Post-translationally, an intermediate of this reaction is the autophosphorylated ppk in which a phosphate is covalently linked to a histidine residue through a N-P bond.

The enzyme catalyses [phosphate](n) + ATP = [phosphate](n+1) + ADP. Its function is as follows. Catalyzes the reversible transfer of the terminal phosphate of ATP to form a long-chain polyphosphate (polyP). This Klebsiella pneumoniae protein is Polyphosphate kinase.